The sequence spans 81 residues: Large ribosomal subunit protein bL27 (81 aa).

Positions 1–11 (MATSKSGGSSK) are enriched in polar residues. The disordered stretch occupies residues 1-20 (MATSKSGGSSKNGRDSISKR).

The protein belongs to the bacterial ribosomal protein bL27 family.

The protein is Large ribosomal subunit protein bL27 of Borreliella afzelii (strain PKo) (Borrelia afzelii).